A 1208-amino-acid chain; its full sequence is Neural cell adhesion molecule L1-like protein (1208 aa).

The N-terminal stretch at 1 to 24 is a signal peptide; the sequence is MEPLLLGRGLIVYLMFLLLKFSKA. The Extracellular portion of the chain corresponds to 25-1082; it reads IEIPSSVQQV…LYDDISTQGW (1058 aa). Ig-like C2-type domains are found at residues 35-124 and 128-223; these read PTII…EEIE and PSVP…MKLT. Cystine bridges form between Cys57/Cys109 and Cys153/Cys204. Residues Lys231 and Asn299 are each glycosylated (N-linked (GlcNAc...) asparagine). 4 Ig-like C2-type domains span residues 235–328, 331–417, 423–510, and 515–607; these read PKLL…VIVE, PRWT…ANID, PLIQ…ANLD, and TKLR…TQVT. 4 disulfide bridges follow: Cys262/Cys310, Cys352/Cys401, Cys445/Cys494, and Cys536/Cys591. N-linked (GlcNAc...) asparagine glycosylation is found at Asn476 and Asn482. The short motif at 555–558 is the DGEA element; sequence DGEA. 2 N-linked (GlcNAc...) asparagine glycosylation sites follow: Asn562 and Asn580. 4 Fibronectin type-III domains span residues 614–709, 714–807, 809–914, and 918–1015; these read PPEN…TPPA, NPQN…SGED, PDTA…TPEG, and QPTF…LGEG. Residues 693–716 are disordered; it reads GRSQPSQPSDHHETPPAAPDRNPQ. N-linked (GlcNAc...) asparagine glycans are attached at residues Asn767, Asn822, Asn945, and Asn1026. Residues 1083–1103 form a helical membrane-spanning segment; it reads FIGLMCAIALLTLLLLTVCFV. The Cytoplasmic portion of the chain corresponds to 1104–1208; the sequence is KRNRGGKYSV…SSTATFPLRA (105 aa). The interval 1131 to 1163 is disordered; it reads ETFGEYSDSDEKPLKGSLRSLNRDMQPTESADS. Phosphoserine occurs at positions 1147, 1160, and 1180. Residues 1149-1161 show a composition bias toward polar residues; that stretch reads RSLNRDMQPTESA. The short motif at 1181 to 1185 is the FIG[AQ]Y element; it reads FIGAY. Residues 1189 to 1208 are disordered; sequence KEKGSVESNGSSTATFPLRA. Residues 1194–1208 show a composition bias toward polar residues; the sequence is VESNGSSTATFPLRA.

It belongs to the immunoglobulin superfamily. L1/neurofascin/NgCAM family. As to quaternary structure, may interact with L1CAM. May interact with ITGB1/ITGA1 heterodimer and ITGB1/ITGA2 heterodimer as well as with ANK3. Post-translationally, cleavage by metalloprotease ADAM8 in the extracellular part generates 2 soluble forms (125 kDa and 165 kDa) in vitro and is inhibited by metalloprotease inhibitors. Cleaved by BACE1. In terms of processing, N-glycosylated. Contains N-linked oligosaccharides with a sulfated carbohydrate structure type HNK-1 (SO4-3-GlcUABeta1,3GalBeta1,4GlcNAc). O-glycosylated. Expressed in the fetal and adult brain as well as in Schwann cell culture. Also detected in adult peripheral tissues.

It localises to the cell membrane. The protein resides in the secreted. The protein localises to the extracellular space. It is found in the extracellular matrix. Its function is as follows. Extracellular matrix and cell adhesion protein that plays a role in nervous system development and in synaptic plasticity. Both soluble and membranous forms promote neurite outgrowth of cerebellar and hippocampal neurons and suppress neuronal cell death. Plays a role in neuronal positioning of pyramidal neurons and in regulation of both the number of interneurons and the efficacy of GABAergic synapses. May play a role in regulating cell migration in nerve regeneration and cortical development. Potentiates integrin-dependent cell migration towards extracellular matrix proteins. Recruits ANK3 to the plasma membrane. The chain is Neural cell adhesion molecule L1-like protein (CHL1) from Homo sapiens (Human).